The following is a 244-amino-acid chain: Protein crossbronx (244 aa).

One can recognise a UBC core domain in the interval 20 to 176 (QQEYKILAEY…VLENIKESKE (157 aa)).

It belongs to the ubiquitin-conjugating enzyme family. FTS subfamily.

The protein is Protein crossbronx (cbx) of Drosophila persimilis (Fruit fly).